Reading from the N-terminus, the 222-residue chain is MQDTIPVLTIDGPSGAGKGTAARAVAARLGWNFLDSGAIYRALAVAAVDRGVSREDESALAALAASLDLVFGADSTARILLWDADISGRIVTEECGNLASKLAAFPAVRQALLDKQRGFRRPPGLVADGRDMGTVVFPDAPYKVFLTASAEVRARRRYNQLKEKGMDVSLAHLTEEIEERDRRDRERQIAPLRAAADAVVIDSSDLSVDEVIQVCLSVVQSH.

12-20 (GPSGAGKGT) is a binding site for ATP.

The protein belongs to the cytidylate kinase family. Type 1 subfamily.

It is found in the cytoplasm. It catalyses the reaction CMP + ATP = CDP + ADP. It carries out the reaction dCMP + ATP = dCDP + ADP. The protein is Cytidylate kinase of Methylococcus capsulatus (strain ATCC 33009 / NCIMB 11132 / Bath).